The following is a 444-amino-acid chain: L-seryl-tRNA(Sec) selenium transferase (444 aa).

At lysine 284 the chain carries N6-(pyridoxal phosphate)lysine.

This sequence belongs to the SelA family. The cofactor is pyridoxal 5'-phosphate.

The protein resides in the cytoplasm. It carries out the reaction L-seryl-tRNA(Sec) + selenophosphate + H(+) = L-selenocysteinyl-tRNA(Sec) + phosphate. It functions in the pathway aminoacyl-tRNA biosynthesis; selenocysteinyl-tRNA(Sec) biosynthesis; selenocysteinyl-tRNA(Sec) from L-seryl-tRNA(Sec) (bacterial route): step 1/1. Functionally, converts seryl-tRNA(Sec) to selenocysteinyl-tRNA(Sec) required for selenoprotein biosynthesis. The polypeptide is L-seryl-tRNA(Sec) selenium transferase (Wolinella succinogenes (strain ATCC 29543 / DSM 1740 / CCUG 13145 / JCM 31913 / LMG 7466 / NCTC 11488 / FDC 602W) (Vibrio succinogenes)).